The sequence spans 70 residues: Small, acid-soluble spore protein 1 (70 aa).

The protein belongs to the alpha/beta-type SASP family.

Functionally, SASP are bound to spore DNA. They are double-stranded DNA-binding proteins that cause DNA to change to an a-like conformation. They protect the DNA backbone from chemical and enzymatic cleavage and are thus involved in dormant spore's high resistance to UV light. This is Small, acid-soluble spore protein 1 from Bacillus subtilis.